Consider the following 458-residue polypeptide: tRNA-2-methylthio-N(6)-dimethylallyladenosine synthase (458 aa).

The MTTase N-terminal domain maps to 15–134 (KKVFIKTYGC…LPELLEKAKQ (120 aa)). Residues Cys-24, Cys-60, Cys-97, Cys-175, Cys-179, and Cys-182 each coordinate [4Fe-4S] cluster. In terms of domain architecture, Radical SAM core spans 161–395 (RKRGVSAFLT…LLLEQQNTFL (235 aa)). The region spanning 396–457 (RSKIGQKTDV…SNSFVGEMTN (62 aa)) is the TRAM domain.

The protein belongs to the methylthiotransferase family. MiaB subfamily. In terms of assembly, monomer. [4Fe-4S] cluster is required as a cofactor.

The protein resides in the cytoplasm. It catalyses the reaction N(6)-dimethylallyladenosine(37) in tRNA + (sulfur carrier)-SH + AH2 + 2 S-adenosyl-L-methionine = 2-methylsulfanyl-N(6)-dimethylallyladenosine(37) in tRNA + (sulfur carrier)-H + 5'-deoxyadenosine + L-methionine + A + S-adenosyl-L-homocysteine + 2 H(+). In terms of biological role, catalyzes the methylthiolation of N6-(dimethylallyl)adenosine (i(6)A), leading to the formation of 2-methylthio-N6-(dimethylallyl)adenosine (ms(2)i(6)A) at position 37 in tRNAs that read codons beginning with uridine. This is tRNA-2-methylthio-N(6)-dimethylallyladenosine synthase from Bartonella tribocorum (strain CIP 105476 / IBS 506).